A 481-amino-acid polypeptide reads, in one-letter code: tRNA sulfurtransferase (481 aa).

The region spanning 54 to 156 (ADGDGPLRHI…GKDVFFYHEI (103 aa)) is the THUMP domain. ATP-binding positions include 174 to 175 (LV), K256, G278, and Q287. Residues C334 and C433 are joined by a disulfide bond. Positions 388-463 (IPKDAVIIDL…YYSTFSDLKK (76 aa)) constitute a Rhodanese domain. C433 (cysteine persulfide intermediate) is an active-site residue.

Belongs to the ThiI family.

It is found in the cytoplasm. The enzyme catalyses [ThiI sulfur-carrier protein]-S-sulfanyl-L-cysteine + a uridine in tRNA + 2 reduced [2Fe-2S]-[ferredoxin] + ATP + H(+) = [ThiI sulfur-carrier protein]-L-cysteine + a 4-thiouridine in tRNA + 2 oxidized [2Fe-2S]-[ferredoxin] + AMP + diphosphate. It carries out the reaction [ThiS sulfur-carrier protein]-C-terminal Gly-Gly-AMP + S-sulfanyl-L-cysteinyl-[cysteine desulfurase] + AH2 = [ThiS sulfur-carrier protein]-C-terminal-Gly-aminoethanethioate + L-cysteinyl-[cysteine desulfurase] + A + AMP + 2 H(+). The protein operates within cofactor biosynthesis; thiamine diphosphate biosynthesis. Its function is as follows. Catalyzes the ATP-dependent transfer of a sulfur to tRNA to produce 4-thiouridine in position 8 of tRNAs, which functions as a near-UV photosensor. Also catalyzes the transfer of sulfur to the sulfur carrier protein ThiS, forming ThiS-thiocarboxylate. This is a step in the synthesis of thiazole, in the thiamine biosynthesis pathway. The sulfur is donated as persulfide by IscS. This Thermoplasma acidophilum (strain ATCC 25905 / DSM 1728 / JCM 9062 / NBRC 15155 / AMRC-C165) protein is tRNA sulfurtransferase.